A 221-amino-acid polypeptide reads, in one-letter code: UPF0758 protein NTHI1125 (221 aa).

The MPN domain occupies 98-221 (PIINDLETVK…CYSFAENCLL (124 aa)). Histidine 170, histidine 172, and aspartate 183 together coordinate Zn(2+). The JAMM motif motif lies at 170-183 (HNHPSGITEPSYSD).

This sequence belongs to the UPF0758 family.

This is UPF0758 protein NTHI1125 from Haemophilus influenzae (strain 86-028NP).